Here is a 328-residue protein sequence, read N- to C-terminus: uncharacterized protein (328 aa).

This sequence to the C-terminal of para-aminobenzoate synthase component I.

This is an uncharacterized protein from Haemophilus influenzae (strain ATCC 51907 / DSM 11121 / KW20 / Rd).